The primary structure comprises 88 residues: Ribonuclease P protein component 1 (88 aa).

Belongs to the eukaryotic/archaeal RNase P protein component 1 family. As to quaternary structure, consists of a catalytic RNA component and at least 4-5 protein subunits.

The protein localises to the cytoplasm. The enzyme catalyses Endonucleolytic cleavage of RNA, removing 5'-extranucleotides from tRNA precursor.. Functionally, part of ribonuclease P, a protein complex that generates mature tRNA molecules by cleaving their 5'-ends. In Nitrosopumilus maritimus (strain SCM1), this protein is Ribonuclease P protein component 1.